The primary structure comprises 232 residues: Ubiquinone biosynthesis O-methyltransferase (232 aa).

The S-adenosyl-L-methionine site is built by Arg-36, Gly-55, Asp-76, and Met-120.

Belongs to the methyltransferase superfamily. UbiG/COQ3 family.

It catalyses the reaction a 3-demethylubiquinol + S-adenosyl-L-methionine = a ubiquinol + S-adenosyl-L-homocysteine + H(+). It carries out the reaction a 3-(all-trans-polyprenyl)benzene-1,2-diol + S-adenosyl-L-methionine = a 2-methoxy-6-(all-trans-polyprenyl)phenol + S-adenosyl-L-homocysteine + H(+). The protein operates within cofactor biosynthesis; ubiquinone biosynthesis. Its function is as follows. O-methyltransferase that catalyzes the 2 O-methylation steps in the ubiquinone biosynthetic pathway. This Burkholderia mallei (strain ATCC 23344) protein is Ubiquinone biosynthesis O-methyltransferase.